Consider the following 257-residue polypeptide: Proteasome assembly chaperone 1 (257 aa).

It belongs to the PSMG1 family. As to quaternary structure, forms a heterodimer with psmg2.

Chaperone protein which promotes assembly of the 20S proteasome as part of a heterodimer with psmg2. This is Proteasome assembly chaperone 1 (psmg1) from Nematostella vectensis (Starlet sea anemone).